Consider the following 255-residue polypeptide: tRNA (guanine-N(1)-)-methyltransferase (255 aa).

S-adenosyl-L-methionine contacts are provided by residues G113 and 133 to 138; that span reads IGDYVL.

This sequence belongs to the RNA methyltransferase TrmD family. Homodimer.

The protein localises to the cytoplasm. It carries out the reaction guanosine(37) in tRNA + S-adenosyl-L-methionine = N(1)-methylguanosine(37) in tRNA + S-adenosyl-L-homocysteine + H(+). Its function is as follows. Specifically methylates guanosine-37 in various tRNAs. This chain is tRNA (guanine-N(1)-)-methyltransferase, found in Escherichia coli O127:H6 (strain E2348/69 / EPEC).